Reading from the N-terminus, the 205-residue chain is dITP/XTP pyrophosphatase (205 aa).

Residue 8-13 (SGNKGK) participates in substrate binding. The active-site Proton acceptor is the Asp69. Asp69 provides a ligand contact to Mg(2+). Substrate contacts are provided by residues Ser70, 153 to 156 (HGYD), Lys176, and 181 to 182 (HR).

This sequence belongs to the HAM1 NTPase family. Homodimer. It depends on Mg(2+) as a cofactor.

The catalysed reaction is XTP + H2O = XMP + diphosphate + H(+). It catalyses the reaction dITP + H2O = dIMP + diphosphate + H(+). The enzyme catalyses ITP + H2O = IMP + diphosphate + H(+). Pyrophosphatase that catalyzes the hydrolysis of nucleoside triphosphates to their monophosphate derivatives, with a high preference for the non-canonical purine nucleotides XTP (xanthosine triphosphate), dITP (deoxyinosine triphosphate) and ITP. Seems to function as a house-cleaning enzyme that removes non-canonical purine nucleotides from the nucleotide pool, thus preventing their incorporation into DNA/RNA and avoiding chromosomal lesions. The chain is dITP/XTP pyrophosphatase from Shewanella oneidensis (strain ATCC 700550 / JCM 31522 / CIP 106686 / LMG 19005 / NCIMB 14063 / MR-1).